The following is a 367-amino-acid chain: ADP-ribosylhydrolase ARH3 (367 aa).

Mg(2+) contacts are provided by Glu-41, Thr-79, Asp-80, and Asp-81. Position 80 (Asp-80) interacts with substrate. Substrate-binding positions include 149-155 (KGSYGNG), His-185, Leu-238, and Ile-274. Asp-317 and Thr-320 together coordinate Mg(2+).

Belongs to the ADP-ribosylglycohydrolase family. As to quaternary structure, monomer. Requires Mg(2+) as cofactor.

It is found in the nucleus. It localises to the cytoplasm. The protein localises to the chromosome. Its subcellular location is the mitochondrion matrix. It catalyses the reaction [(1''-&gt;2')-ADP-alpha-D-ribose](n) + H2O = [(1''-&gt;2')-ADP-alpha-D-ribose](n-1) + ADP-D-ribose. The catalysed reaction is 1''-O-acetyl-ADP-alpha-D-ribose + H2O = ADP-D-ribose + acetate + H(+). The enzyme catalyses O-(ADP-D-ribosyl)-L-seryl-[protein] + H2O = ADP-D-ribose + L-seryl-[protein]. It carries out the reaction alpha-NAD(+) + H2O = ADP-D-ribose + nicotinamide + H(+). With respect to regulation, the protein undergoes a dramatic conformational switch from closed to open states upon substrate-binding, which enables specific substrate recognition for the 1''-O-linkage. The glutamate flap (Glu-41) blocks substrate entrance to Mg(2+) in the unliganded closed state. In presence of substrate, Glu-41 is ejected from the active site: this closed-to-open transition significantly widens the substrate-binding channel and precisely positions the scissile 1''-O-linkage for cleavage while securing tightly 2'- and 3'-hydroxyls of ADP-ribose. ADP-ribosylhydrolase that preferentially hydrolyzes the scissile alpha-O-linkage attached to the anomeric C1'' position of ADP-ribose and acts on different substrates, such as proteins ADP-ribosylated on serine and threonine, free poly(ADP-ribose) and O-acetyl-ADP-D-ribose. Specifically acts as a serine mono-ADP-ribosylhydrolase by mediating the removal of mono-ADP-ribose attached to serine residues on proteins, thereby playing a key role in DNA damage response. Serine ADP-ribosylation of proteins constitutes the primary form of ADP-ribosylation of proteins in response to DNA damage. Does not hydrolyze ADP-ribosyl-arginine, -cysteine, -diphthamide, or -asparagine bonds. Also able to degrade protein free poly(ADP-ribose), which is synthesized in response to DNA damage: free poly(ADP-ribose) acts as a potent cell death signal and its degradation by ADPRHL2 protects cells from poly(ADP-ribose)-dependent cell death, a process named parthanatos. Also hydrolyzes free poly(ADP-ribose) in mitochondria. Specifically digests O-acetyl-ADP-D-ribose, a product of deacetylation reactions catalyzed by sirtuins. Specifically degrades 1''-O-acetyl-ADP-D-ribose isomer, rather than 2''-O-acetyl-ADP-D-ribose or 3''-O-acetyl-ADP-D-ribose isomers. This Gallus gallus (Chicken) protein is ADP-ribosylhydrolase ARH3 (ADPRS).